The primary structure comprises 422 residues: E3 ubiquitin-protein ligase IE2 (422 aa).

A compositionally biased stretch (polar residues) spans 1–10 (MSRQINAVTP). 2 disordered regions span residues 1–86 (MSRQ…VQII) and 165–215 (SPRS…EGEE). Basic residues predominate over residues 14 to 26 (SRRHRLSLSRRRI). Low complexity predominate over residues 36 to 63 (PSSSSRSQPSSSSRSQPYSSSRSQPYSS). The segment covering 71–80 (ERSQEQRVSE) has biased composition (basic and acidic residues). Positions 179 to 196 (DVLSQSPDLFDSPQSPQQ) are enriched in polar residues. Acidic residues predominate over residues 200–215 (ELEDEDEEEEEEEGEE). An RING-type; degenerate zinc finger spans residues 220-268 (CNICFTTLKDTKNVDSSFVTSIDCNHAVCFKCYVRIIMDNSTYKCFCSA). Residues 314–414 (IDLNDVERLE…RRNSELVAEL (101 aa)) adopt a coiled-coil conformation.

Belongs to the alphabaculovirus IE2 protein family. In terms of assembly, homooligomer. Post-translationally, auto-ubiquitinated.

It is found in the host nucleus. The enzyme catalyses S-ubiquitinyl-[E2 ubiquitin-conjugating enzyme]-L-cysteine + [acceptor protein]-L-lysine = [E2 ubiquitin-conjugating enzyme]-L-cysteine + N(6)-ubiquitinyl-[acceptor protein]-L-lysine.. Its function is as follows. RING-finger E3 ubiquitin ligase that plays an important regulatory role during the initial stages of infection. Migrates to specific nuclear foci early in infection supposely to prepare the sites for viral replication by targeting and ubiquitinating host proteins. The protein is E3 ubiquitin-protein ligase IE2 (IE2) of Bombyx mori nuclear polyhedrosis virus (BmNPV).